The following is a 140-amino-acid chain: 3-hydroxyacyl-[acyl-carrier-protein] dehydratase FabZ (140 aa).

H47 is an active-site residue.

It belongs to the thioester dehydratase family. FabZ subfamily.

Its subcellular location is the cytoplasm. It carries out the reaction a (3R)-hydroxyacyl-[ACP] = a (2E)-enoyl-[ACP] + H2O. In terms of biological role, involved in unsaturated fatty acids biosynthesis. Catalyzes the dehydration of short chain beta-hydroxyacyl-ACPs and long chain saturated and unsaturated beta-hydroxyacyl-ACPs. The protein is 3-hydroxyacyl-[acyl-carrier-protein] dehydratase FabZ of Streptococcus uberis (strain ATCC BAA-854 / 0140J).